The chain runs to 281 residues: Nuclear transcription factor Y subunit nfya-2 (281 aa).

Disordered regions lie at residues 1-27 (MNPR…ARPQ) and 163-261 (REMR…VQEE). Residues 150–173 (MVNPRQYKRIIKRREMRQKMEDSG) carry the Subunit association domain (SAD) motif. Positions 166–188 (RQKMEDSGRLPLERQKYMHESRR) are enriched in basic and acidic residues. The NFYA/HAP2-type DNA-binding region spans 180–204 (QKYMHESRRQHALKRRRTGGRFDAN). The span at 189–198 (QHALKRRRTG) shows a compositional bias: basic residues. A compositionally biased stretch (low complexity) spans 204 to 220 (NAEAAAASSEPSISSAA).

It belongs to the NFYA/HAP2 subunit family. In terms of assembly, forms a heterotrimeric transcription factor complex (nfya-2-NF-Y complex) composed of nfya-2, nfyb-1 and nfyc-1. Interacts with the nfyb-1 and nfyc-1 dimer; the interaction is required for subsequent binding to the 5'-CCAAT-3' box motif in DNA. Does not interact with either nfyb-1 or nfyc-1 in their monomeric form. In terms of tissue distribution, highly expressed in certain parts of the gonads. Expressed in the spermatheca, intestine and in some neurons in the head. Not expressed in the intestine, the hypodermis, body wall muscle surrounding the pseudocoelomic space, secretory cells in the pharyngeal terminal bulb wall, in the small ganglia surrounding the pharynx and in the neurons running anteriorly to the sensory organs in the head.

The protein localises to the nucleus. In terms of biological role, component of the sequence-specific heterotrimeric transcription factor (nfya-2-NF-Y) which specifically recognizes a 5'-CCAAT-3' box motif found in the promoters of its target genes to regulate their expression and control cellular identity in particular tissue types. In association with the components in the nfya-2-NF-Y complex, may repress the expression of the T-box transcription factor tbx-2 throughout larval development, which most likely restricts its expression to certain tissues. The chain is Nuclear transcription factor Y subunit nfya-2 from Caenorhabditis elegans.